We begin with the raw amino-acid sequence, 311 residues long: 4-hydroxy-tetrahydrodipicolinate synthase (311 aa).

Position 49 (Thr49) interacts with pyruvate. The active-site Proton donor/acceptor is the Tyr138. Catalysis depends on Lys166, which acts as the Schiff-base intermediate with substrate. Ile207 contacts pyruvate.

Belongs to the DapA family. As to quaternary structure, homotetramer; dimer of dimers.

The protein localises to the cytoplasm. The enzyme catalyses L-aspartate 4-semialdehyde + pyruvate = (2S,4S)-4-hydroxy-2,3,4,5-tetrahydrodipicolinate + H2O + H(+). Its pathway is amino-acid biosynthesis; L-lysine biosynthesis via DAP pathway; (S)-tetrahydrodipicolinate from L-aspartate: step 3/4. In terms of biological role, catalyzes the condensation of (S)-aspartate-beta-semialdehyde [(S)-ASA] and pyruvate to 4-hydroxy-tetrahydrodipicolinate (HTPA). The chain is 4-hydroxy-tetrahydrodipicolinate synthase from Limosilactobacillus fermentum (strain NBRC 3956 / LMG 18251) (Lactobacillus fermentum).